The sequence spans 288 residues: Glucose-1-phosphate thymidylyltransferase (288 aa).

Position 8 (G8) interacts with dTDP-alpha-D-glucose. The dTTP site is built by G8, G11, T12, R13, K23, Q24, Q80, G85, and D108. Positions 23, 24, 80, 85, 108, 109, 143, 158, 159, 169, and 222 each coordinate dTDP-alpha-D-glucose. Residue D108 coordinates Mg(2+). D222 lines the Mg(2+) pocket.

Belongs to the glucose-1-phosphate thymidylyltransferase family. Mg(2+) serves as cofactor.

It catalyses the reaction dTTP + alpha-D-glucose 1-phosphate + H(+) = dTDP-alpha-D-glucose + diphosphate. The protein operates within carbohydrate biosynthesis; dTDP-L-rhamnose biosynthesis. Its function is as follows. Catalyzes the conversion of glucose-1-phosphate and dTTP to dTDP-glucose and pyrophosphate. Involved in the biosynthesis of the dTDP-L-rhamnose which is a component of the critical linker, D-N-acetylglucosamine-L-rhamnose disaccharide, which connects the galactan region of arabinogalactan to peptidoglycan via a phosphodiester linkage. The chain is Glucose-1-phosphate thymidylyltransferase (rmlA) from Mycolicibacterium smegmatis (strain ATCC 700084 / mc(2)155) (Mycobacterium smegmatis).